The primary structure comprises 508 residues: Protein MGF 505-9R (508 aa).

ANK repeat units follow at residues 54-83, 253-282, and 313-343; these read SINL…NLHY, QVDT…RKTV, and IIKK…KINL.

The protein belongs to the asfivirus MGF 505 family.

In terms of biological role, plays a role in virus cell tropism, and may be required for efficient virus replication in macrophages. The sequence is that of Protein MGF 505-9R from Ornithodoros (relapsing fever ticks).